Consider the following 170-residue polypeptide: NADH-quinone oxidoreductase subunit B (170 aa).

The [4Fe-4S] cluster site is built by Cys37, Cys38, Cys102, and Cys131.

Belongs to the complex I 20 kDa subunit family. In terms of assembly, NDH-1 is composed of 14 different subunits. Subunits NuoB, C, D, E, F, and G constitute the peripheral sector of the complex. [4Fe-4S] cluster serves as cofactor.

Its subcellular location is the cell inner membrane. It catalyses the reaction a quinone + NADH + 5 H(+)(in) = a quinol + NAD(+) + 4 H(+)(out). Its function is as follows. NDH-1 shuttles electrons from NADH, via FMN and iron-sulfur (Fe-S) centers, to quinones in the respiratory chain. The immediate electron acceptor for the enzyme in this species is believed to be ubiquinone. Couples the redox reaction to proton translocation (for every two electrons transferred, four hydrogen ions are translocated across the cytoplasmic membrane), and thus conserves the redox energy in a proton gradient. This is NADH-quinone oxidoreductase subunit B from Geotalea daltonii (strain DSM 22248 / JCM 15807 / FRC-32) (Geobacter daltonii).